Reading from the N-terminus, the 290-residue chain is uncharacterized protein (290 aa).

Its subcellular location is the cytoplasm. This is an uncharacterized protein from Saccharomyces cerevisiae (strain ATCC 204508 / S288c) (Baker's yeast).